Reading from the N-terminus, the 116-residue chain is Ribosome-binding factor A (116 aa).

It belongs to the RbfA family. Monomer. Binds 30S ribosomal subunits, but not 50S ribosomal subunits or 70S ribosomes.

The protein localises to the cytoplasm. In terms of biological role, one of several proteins that assist in the late maturation steps of the functional core of the 30S ribosomal subunit. Associates with free 30S ribosomal subunits (but not with 30S subunits that are part of 70S ribosomes or polysomes). Required for efficient processing of 16S rRNA. May interact with the 5'-terminal helix region of 16S rRNA. The sequence is that of Ribosome-binding factor A from Streptococcus pneumoniae (strain ATCC 700669 / Spain 23F-1).